The following is a 226-amino-acid chain: Cytidylate kinase (226 aa).

10–18 (GPASSGKST) provides a ligand contact to ATP.

It belongs to the cytidylate kinase family. Type 1 subfamily.

The protein resides in the cytoplasm. It carries out the reaction CMP + ATP = CDP + ADP. The enzyme catalyses dCMP + ATP = dCDP + ADP. This is Cytidylate kinase from Streptococcus pyogenes serotype M18 (strain MGAS8232).